A 387-amino-acid chain; its full sequence is LL-diaminopimelate aminotransferase (387 aa).

The substrate site is built by Tyr14 and Gly39. Pyridoxal 5'-phosphate contacts are provided by residues Tyr68, 102 to 103, Tyr127, Asn177, Tyr208, and 236 to 238; these read SK and SLS. Residues Lys103, Tyr127, and Asn177 each contribute to the substrate site. Residue Lys239 is modified to N6-(pyridoxal phosphate)lysine. Residue Arg247 participates in pyridoxal 5'-phosphate binding. Residue Arg365 coordinates substrate.

Belongs to the class-I pyridoxal-phosphate-dependent aminotransferase family. LL-diaminopimelate aminotransferase subfamily. In terms of assembly, homodimer. Pyridoxal 5'-phosphate serves as cofactor.

It carries out the reaction (2S,6S)-2,6-diaminopimelate + 2-oxoglutarate = (S)-2,3,4,5-tetrahydrodipicolinate + L-glutamate + H2O + H(+). The protein operates within amino-acid biosynthesis; L-lysine biosynthesis via DAP pathway; LL-2,6-diaminopimelate from (S)-tetrahydrodipicolinate (aminotransferase route): step 1/1. Functionally, involved in the synthesis of meso-diaminopimelate (m-DAP or DL-DAP), required for both lysine and peptidoglycan biosynthesis. Catalyzes the direct conversion of tetrahydrodipicolinate to LL-diaminopimelate. This Aquifex aeolicus (strain VF5) protein is LL-diaminopimelate aminotransferase.